The following is an 845-amino-acid chain: MSDIFNSPQNKASILTALMKSTTGDVEDVLIPKRFRPAKDPLDSPQAAAQFLKDNKYRILRPRAIPTMVELETDAALPRLRQMVEDGKLKDTVSVPEGTTAFYPKYYPFHKPDHDEVGTFGAPDITLLKQLTFFLLENDFPTGPETLRQVREAIATLQYGSGSYSGQLNRLLAMKGVATGRNPNKTPKTVGYTNEQLAKLLEQTLPINTPKHEDPDLRWAPSWLINYTGDLSTDKSYLPHVTIKSSAGLPYIGKTKGDTTAEALVLADSFIRDLGRAATSADPEAGVKKTITDFWYLSCGLLFPKGERYTQVDWDKKTRNIWSAPYPTHLLLSMVSTPVMNESKLNITNTQTPSLYGFSPFHGGMDRIMTIIRDSLDNDEDLVMIYADNIYILQDNTWYSIDLEKGEANCTPQHMQAMMYYLLTRGWTNEDGSPRYNPTWATFAMNVAPSMVVDSSCLLMNLQLKTYGQGSGNAFTFLNNHLMSTIVVAEWVKAGKPNPMTKEFMDLEEKTGINFKIERELKNLRETIVEAVETAPQDGYLADGSDLPPIRPGKAVELDLLGWSAIYSRQMEMFVPVLENERLIASAAYPKGLENKALARKPGAEIAYQIVRYEAIRLVGGWNNPLLETAAKHMSLDKRKRLEVKGIDVTGFLDDWNNMSEFGGDLEGITLSEPLTNQTLVDINTPLDSFDPKARPQTPRSPKKTLDEVTTAITSGTYKDPKSAVWRLLDQRTKLRVSTLRDQALALKPASSSVDNWAEATEELAQQQQLLMKANNLLKSSLTETREALETIQSDKIIAGKSNPEKNPGTAANPVVGYGEFSEKIPLTPTQKKNAKRREKQRRNQ.

248-255 lines the GTP pocket; the sequence is GLPYIGKT. One can recognise a RdRp catalytic domain in the interval 384–588; that stretch reads MIYADNIYIL…ENERLIASAA (205 aa). Disordered regions lie at residues 686–706 and 799–845; these read PLDS…KKTL and AGKS…RRNQ. The segment covering 833–845 has biased composition (basic residues); sequence KNAKRREKQRRNQ.

Interacts with VP3 in the cytoplasm. In terms of processing, exists in multiple phosphorylated forms.

The protein resides in the virion. The catalysed reaction is RNA(n) + a ribonucleoside 5'-triphosphate = RNA(n+1) + diphosphate. RNA-dependent RNA polymerase which is found both free and covalently attached to the genomic RNA. May also contain guanylyl and methyl transferase activities. The protein is RNA-directed RNA polymerase (VP1) of Oncorhynchus mykiss (Rainbow trout).